Here is a 182-residue protein sequence, read N- to C-terminus: Large ribosomal subunit protein bL25 (182 aa).

It belongs to the bacterial ribosomal protein bL25 family. CTC subfamily. In terms of assembly, part of the 50S ribosomal subunit; part of the 5S rRNA/L5/L18/L25 subcomplex. Contacts the 5S rRNA. Binds to the 5S rRNA independently of L5 and L18.

Functionally, this is one of the proteins that binds to the 5S RNA in the ribosome where it forms part of the central protuberance. This is Large ribosomal subunit protein bL25 from Borrelia garinii subsp. bavariensis (strain ATCC BAA-2496 / DSM 23469 / PBi) (Borreliella bavariensis).